The chain runs to 308 residues: Ribosomal RNA large subunit methyltransferase F (308 aa).

This sequence belongs to the methyltransferase superfamily. METTL16/RlmF family.

It localises to the cytoplasm. The enzyme catalyses adenosine(1618) in 23S rRNA + S-adenosyl-L-methionine = N(6)-methyladenosine(1618) in 23S rRNA + S-adenosyl-L-homocysteine + H(+). Its function is as follows. Specifically methylates the adenine in position 1618 of 23S rRNA. The protein is Ribosomal RNA large subunit methyltransferase F of Shigella flexneri serotype 5b (strain 8401).